Here is a 658-residue protein sequence, read N- to C-terminus: Glycogen debranching enzyme (658 aa).

D336 (nucleophile) is an active-site residue. E371 functions as the Proton donor in the catalytic mechanism. Positions 459-484 (EANGEENRDGTNSNYSDNHGKEGLGG) are disordered.

It belongs to the glycosyl hydrolase 13 family.

It carries out the reaction Hydrolysis of (1-&gt;6)-alpha-D-glucosidic linkages to branches with degrees of polymerization of three or four glucose residues in limit dextrin.. The protein operates within glycan degradation; glycogen degradation. Functionally, removes maltotriose and maltotetraose chains that are attached by 1,6-alpha-linkage to the limit dextrin main chain, generating a debranched limit dextrin. This is Glycogen debranching enzyme from Salmonella choleraesuis (strain SC-B67).